A 545-amino-acid polypeptide reads, in one-letter code: Threonine--tRNA ligase catalytic subunit (545 aa).

Residues 139-433 (DHRLIGEKLD…LLEHFKGKLP (295 aa)) are catalytic. Zn(2+) contacts are provided by Cys231, His282, and His410.

This sequence belongs to the class-II aminoacyl-tRNA synthetase family. Homodimer. Probably interacts with its editing subunit. Zn(2+) is required as a cofactor.

The protein resides in the cytoplasm. The catalysed reaction is tRNA(Thr) + L-threonine + ATP = L-threonyl-tRNA(Thr) + AMP + diphosphate + H(+). In terms of biological role, catalyzes the attachment of threonine to tRNA(Thr) in a two-step reaction: L-threonine is first activated by ATP to form Thr-AMP and then transferred to the acceptor end of tRNA(Thr). Also activates L-serine and transfers it to tRNA(Thr) but cannot deacylate incorrectly charged amino acid; unlike most archaea the editing function is found in a freestanding protein. The sequence is that of Threonine--tRNA ligase catalytic subunit from Saccharolobus islandicus (strain M.16.27) (Sulfolobus islandicus).